Here is a 435-residue protein sequence, read N- to C-terminus: Glutamate-1-semialdehyde 2,1-aminomutase (435 aa).

Lys-266 carries the N6-(pyridoxal phosphate)lysine modification.

This sequence belongs to the class-III pyridoxal-phosphate-dependent aminotransferase family. HemL subfamily. Homodimer. Pyridoxal 5'-phosphate is required as a cofactor.

The protein resides in the cytoplasm. It catalyses the reaction (S)-4-amino-5-oxopentanoate = 5-aminolevulinate. It functions in the pathway porphyrin-containing compound metabolism; protoporphyrin-IX biosynthesis; 5-aminolevulinate from L-glutamyl-tRNA(Glu): step 2/2. The polypeptide is Glutamate-1-semialdehyde 2,1-aminomutase (Coxiella burnetii (strain Dugway 5J108-111)).